Consider the following 399-residue polypeptide: Argininosuccinate synthase (399 aa).

9 to 17 (AYSGGLDTS) serves as a coordination point for ATP. Tyr85 is an L-citrulline binding site. Gly115 serves as a coordination point for ATP. The L-aspartate site is built by Thr117, Asn121, and Asp122. Asn121 is a binding site for L-citrulline. 4 residues coordinate L-citrulline: Arg125, Ser173, Glu258, and Tyr270.

Belongs to the argininosuccinate synthase family. Type 1 subfamily. In terms of assembly, homotetramer.

Its subcellular location is the cytoplasm. The catalysed reaction is L-citrulline + L-aspartate + ATP = 2-(N(omega)-L-arginino)succinate + AMP + diphosphate + H(+). Its pathway is amino-acid biosynthesis; L-arginine biosynthesis; L-arginine from L-ornithine and carbamoyl phosphate: step 2/3. This is Argininosuccinate synthase from Streptococcus thermophilus (strain CNRZ 1066).